We begin with the raw amino-acid sequence, 210 residues long: Large ribosomal subunit protein uL4 (210 aa).

The segment covering 41–52 (QTNARQGTASTK) has biased composition (polar residues). The segment at 41–71 (QTNARQGTASTKTRAEVRGGGRKPWRQKGTG) is disordered. Positions 60–71 (GGRKPWRQKGTG) are enriched in basic residues.

The protein belongs to the universal ribosomal protein uL4 family. Part of the 50S ribosomal subunit.

One of the primary rRNA binding proteins, this protein initially binds near the 5'-end of the 23S rRNA. It is important during the early stages of 50S assembly. It makes multiple contacts with different domains of the 23S rRNA in the assembled 50S subunit and ribosome. Functionally, forms part of the polypeptide exit tunnel. In Trichormus variabilis (strain ATCC 29413 / PCC 7937) (Anabaena variabilis), this protein is Large ribosomal subunit protein uL4.